The following is a 249-amino-acid chain: Demethylmenaquinone methyltransferase (249 aa).

S-adenosyl-L-methionine-binding positions include T67, D87, and 115-116 (DA).

It belongs to the class I-like SAM-binding methyltransferase superfamily. MenG/UbiE family.

It carries out the reaction a 2-demethylmenaquinol + S-adenosyl-L-methionine = a menaquinol + S-adenosyl-L-homocysteine + H(+). It functions in the pathway quinol/quinone metabolism; menaquinone biosynthesis; menaquinol from 1,4-dihydroxy-2-naphthoate: step 2/2. Methyltransferase required for the conversion of demethylmenaquinol (DMKH2) to menaquinol (MKH2). The chain is Demethylmenaquinone methyltransferase from Leptospira interrogans serogroup Icterohaemorrhagiae serovar copenhageni (strain Fiocruz L1-130).